Reading from the N-terminus, the 171-residue chain is MIRPSAFSYEDLLQCGRGEMFGPGNAQLPMPPMLMFDRITYISDEGGAFGKGEINAEMEIKPDSWFFNCHFPSDPVMPGCLGLDAMWQLLGFYLAWRGGPGHGRALGSGEVKFTGQVTPKNKLVTYHINLKRVIMRKLVMGIADGIMAVDGREIYLAKDLRVGLFVSTDSF.

The active site involves histidine 70.

Belongs to the thioester dehydratase family. FabA subfamily. As to quaternary structure, homodimer.

The protein localises to the cytoplasm. The enzyme catalyses a (3R)-hydroxyacyl-[ACP] = a (2E)-enoyl-[ACP] + H2O. The catalysed reaction is (3R)-hydroxydecanoyl-[ACP] = (2E)-decenoyl-[ACP] + H2O. It carries out the reaction (2E)-decenoyl-[ACP] = (3Z)-decenoyl-[ACP]. It participates in lipid metabolism; fatty acid biosynthesis. Its function is as follows. Necessary for the introduction of cis unsaturation into fatty acids. Catalyzes the dehydration of (3R)-3-hydroxydecanoyl-ACP to E-(2)-decenoyl-ACP and then its isomerization to Z-(3)-decenoyl-ACP. Can catalyze the dehydratase reaction for beta-hydroxyacyl-ACPs with saturated chain lengths up to 16:0, being most active on intermediate chain length. The polypeptide is 3-hydroxydecanoyl-[acyl-carrier-protein] dehydratase (Nitrosococcus oceani (strain ATCC 19707 / BCRC 17464 / JCM 30415 / NCIMB 11848 / C-107)).